Reading from the N-terminus, the 512-residue chain is Cobyric acid synthase (512 aa).

One can recognise a GATase cobBQ-type domain in the interval 251 to 451; the sequence is ALDIAVIRLP…IHGLFDSHHF (201 aa). Catalysis depends on C332, which acts as the Nucleophile. The active site involves H443.

This sequence belongs to the CobB/CobQ family. CobQ subfamily.

It participates in cofactor biosynthesis; adenosylcobalamin biosynthesis. Catalyzes amidations at positions B, D, E, and G on adenosylcobyrinic A,C-diamide. NH(2) groups are provided by glutamine, and one molecule of ATP is hydrogenolyzed for each amidation. The chain is Cobyric acid synthase from Yersinia enterocolitica serotype O:8 / biotype 1B (strain NCTC 13174 / 8081).